We begin with the raw amino-acid sequence, 297 residues long: UDP-N-acetylenolpyruvoylglucosamine reductase (297 aa).

Residues 27-192 (IGGPADALLE…LRAAYRLHPG (166 aa)) form the FAD-binding PCMH-type domain. R170 is an active-site residue. S220 acts as the Proton donor in catalysis. E290 is a catalytic residue.

This sequence belongs to the MurB family. The cofactor is FAD.

The protein localises to the cytoplasm. It carries out the reaction UDP-N-acetyl-alpha-D-muramate + NADP(+) = UDP-N-acetyl-3-O-(1-carboxyvinyl)-alpha-D-glucosamine + NADPH + H(+). Its pathway is cell wall biogenesis; peptidoglycan biosynthesis. Cell wall formation. The polypeptide is UDP-N-acetylenolpyruvoylglucosamine reductase (Rubrobacter xylanophilus (strain DSM 9941 / JCM 11954 / NBRC 16129 / PRD-1)).